Here is a 140-residue protein sequence, read N- to C-terminus: MSHLNIANLGEDFVAQWLQSTGWIILHRQFSCRWGEIDIIAQHTRNNQESILAFVEVKTRSPGNWDDGGRGAITLKKQAKIERTAKIFLAKYPDKAEYICRFDVAIVAYQGISQQDHAAIGEYKFQLQEYIPAAFDCLIY.

It belongs to the UPF0102 family.

The sequence is that of UPF0102 protein alr1796 from Nostoc sp. (strain PCC 7120 / SAG 25.82 / UTEX 2576).